A 407-amino-acid chain; its full sequence is Transmembrane protein 184B (407 aa).

Residues 1-24 (MTVRGAALAPDPASPTTAAASPSI) are disordered. Helical transmembrane passes span 40–60 (FLMTTAAQAISGFFVWTALLI), 84–104 (ILFIVPIYAFDSWLSLLFFTN), 121–141 (LVIYNFLSLCYEYLGGESSIM), 178–198 (LQFCVVKPLMAVSTVVLQAFG), 214–234 (VTIIYNISVSLALYALFLFYF), 249–269 (FFMVKSVIFLSFWQGMLLAIL), and 290–310 (VAAGYQDFIICVEMFFAALAL). The segment at 369–395 (TLEPGPTWRGGAHGLSRSHSLSGARDN) is disordered. A phosphoserine mark is found at S388, S402, and S403.

The protein belongs to the TMEM184 family.

The protein localises to the membrane. Functionally, may activate the MAP kinase signaling pathway. In Bos taurus (Bovine), this protein is Transmembrane protein 184B (TMEM184B).